The sequence spans 480 residues: Endothelial transcription factor GATA-2 (480 aa).

Ser73 carries the phosphoserine modification. Residue Arg86 is modified to Asymmetric dimethylarginine. The disordered stretch occupies residues 119-209 (SPFSKTPLHP…GSAARGEDKD (91 aa)). A compositionally biased stretch (gly residues) spans 143–153 (GAGGGSGGGSG). The span at 185–203 (PSTTGAASPASSSAGGSAA) shows a compositional bias: low complexity. Position 192 is a phosphoserine (Ser192). 2 GATA-type zinc fingers span residues 295–319 (CVNCGATATPLWRRDGTGHYLCNAC) and 349–373 (CANCQTTTTTLWRRNANGDPVCNAC). Lys389 is covalently cross-linked (Glycyl lysine isopeptide (Lys-Gly) (interchain with G-Cter in SUMO2)). The segment at 448-480 (HSGHILPTPTPIHPSSSLSFGHPHPSSMVTAMG) is disordered.

As to quaternary structure, interacts with BRD3. Interacts with AR and CCAR1. Interacts with MDFIC. As to expression, endothelial cells.

It is found in the nucleus. Its function is as follows. Transcriptional activator which regulates endothelin-1 gene expression in endothelial cells. Binds to the consensus sequence 5'-AGATAG-3'. The polypeptide is Endothelial transcription factor GATA-2 (GATA2) (Homo sapiens (Human)).